The primary structure comprises 457 residues: MSLPFNTGIFSVSRLNQTVRQLLEMEMGRIWLSAEISNFSHPSSGHWYFTLKDERAQVRAAMFRSSNQRVTFRPQNGQQVLVRAIITLYEPRGDYQLIVENMQPAGDGLLQQQFELLKQKLDAEGLFDQSHKKPLPSPAQQLGVITSTSGAALHDILNILKRRDPSLPIIIYPTSVQGAEAPLQIIRAIELANERRECDVLIVGRGGGSLEDLWSFNDERVARAIFHSDIPIVSAVGHETDVTIADFVADLRAPTPSAAAELVSRNQLELLRQIQSQQQRLEMAMDYFFAQKQHIFSLLSHRLQQQHPHLRLARQQNLLVNLRQRLTDSLQRYLKQNSLAYEKLQQRLWYAEPSQQIHHYSQQIQQQDFRLRQAIERQISRSREKFAVSCSRMEAVSPLATLARGYSISQTSDGKLLKQTKQVDVGDVLNTRLQDGWIESEVLKIKKERKKRSANLK.

Belongs to the XseA family. As to quaternary structure, heterooligomer composed of large and small subunits.

The protein resides in the cytoplasm. It carries out the reaction Exonucleolytic cleavage in either 5'- to 3'- or 3'- to 5'-direction to yield nucleoside 5'-phosphates.. In terms of biological role, bidirectionally degrades single-stranded DNA into large acid-insoluble oligonucleotides, which are then degraded further into small acid-soluble oligonucleotides. The polypeptide is Exodeoxyribonuclease 7 large subunit (Photorhabdus laumondii subsp. laumondii (strain DSM 15139 / CIP 105565 / TT01) (Photorhabdus luminescens subsp. laumondii)).